A 129-amino-acid chain; its full sequence is Nif-specific regulatory protein (129 aa).

Residues 1–46 form the Sigma-54 factor interaction domain; sequence EFLLTKIGRQQGRPLTVTDSAIRLLMSHRWPGNVRDVENCLERSAI. Positions 101 to 129 form a DNA-binding region, H-T-H motif; that stretch reads QAKAARLLGMTPRQIAYRIQTLNIHMRKI.

As to quaternary structure, interacts with sigma-54.

Required for activation of most nif operons, which are directly involved in nitrogen fixation. This is Nif-specific regulatory protein (nifA) from Azotobacter chroococcum mcd 1.